The following is a 280-amino-acid chain: MAAVVALSLRRRLPATTLGGACLQASRGAQTAAATAPRIKKFAIYRWDPDKAGDKPHMQTYEVDLNKCGPMVLDALIKIKNEVDSTLTFRRSCREGICGSCAMNINGGNTLACTRRIDTNLNKVSKIYPLPHMYVIKDLVPDLSNFYAQYKSIEPYLKKKDESQEGKQQYLQSIEEREKLDGLYECILCACCSTSCPSYWWNGDKYLGPAVLMQAYRWMIDSRDDFTEERLAKLQDPFSLYRCHTIMNCTRTCPKGLNPGKAIAEIKKMMATYKEKKASV.

A mitochondrion-targeting transit peptide spans 1-28 (MAAVVALSLRRRLPATTLGGACLQASRG). The 2Fe-2S ferredoxin-type domain maps to 40–133 (KKFAIYRWDP…VSKIYPLPHM (94 aa)). N6-acetyllysine occurs at positions 51 and 55. Positions 93, 98, 101, and 113 each coordinate [2Fe-2S] cluster. Positions 146–218 (FYAQYKSIEP…PAVLMQAYRW (73 aa)) are interaction with SDHAF1. The 4Fe-4S ferredoxin-type domain occupies 176 to 206 (EREKLDGLYECILCACCSTSCPSYWWNGDKY). [4Fe-4S] cluster is bound by residues C186, C189, and C192. C196 is a [3Fe-4S] cluster binding site. Residue W201 coordinates a ubiquinone. [3Fe-4S] cluster is bound by residues C243 and C249. C253 provides a ligand contact to [4Fe-4S] cluster.

This sequence belongs to the succinate dehydrogenase/fumarate reductase iron-sulfur protein family. Component of complex II composed of four subunits: the flavoprotein (FP) SDHA, iron-sulfur protein (IP) SDHB, and a cytochrome b560 composed of SDHC and SDHD. Interacts with SDHAF1; the interaction is required for iron-sulfur cluster incorporation into SDHB. In terms of assembly, (Microbial infection) Interacts with JC virus small t antigen. Requires [2Fe-2S] cluster as cofactor. It depends on [3Fe-4S] cluster as a cofactor. [4Fe-4S] cluster serves as cofactor.

The protein localises to the mitochondrion inner membrane. It catalyses the reaction a quinone + succinate = fumarate + a quinol. The enzyme catalyses (R)-malate + a quinone = enol-oxaloacetate + a quinol. It carries out the reaction (S)-malate + a quinone = enol-oxaloacetate + a quinol. It functions in the pathway carbohydrate metabolism; tricarboxylic acid cycle; fumarate from succinate (eukaryal route): step 1/1. With respect to regulation, enol-oxaloacetate inhibits the succinate dehydrogenase activity. Iron-sulfur protein (IP) subunit of the succinate dehydrogenase complex (mitochondrial respiratory chain complex II), responsible for transferring electrons from succinate to ubiquinone (coenzyme Q). SDH also oxidizes malate to the non-canonical enol form of oxaloacetate, enol-oxaloacetate. Enol-oxaloacetate, which is a potent inhibitor of the succinate dehydrogenase activity, is further isomerized into keto-oxaloacetate. The protein is Succinate dehydrogenase [ubiquinone] iron-sulfur subunit, mitochondrial (SDHB) of Homo sapiens (Human).